The sequence spans 274 residues: Diaminopimelate epimerase (274 aa).

Substrate is bound by residues Asn11 and Asn76. Cys85 acts as the Proton donor in catalysis. Substrate is bound by residues Gly86–Asn87, Asn157, Asn189, and Glu207–Arg208. The Proton acceptor role is filled by Cys216. Gly217 to Thr218 provides a ligand contact to substrate.

This sequence belongs to the diaminopimelate epimerase family. As to quaternary structure, homodimer.

It localises to the cytoplasm. The enzyme catalyses (2S,6S)-2,6-diaminopimelate = meso-2,6-diaminopimelate. It participates in amino-acid biosynthesis; L-lysine biosynthesis via DAP pathway; DL-2,6-diaminopimelate from LL-2,6-diaminopimelate: step 1/1. Functionally, catalyzes the stereoinversion of LL-2,6-diaminopimelate (L,L-DAP) to meso-diaminopimelate (meso-DAP), a precursor of L-lysine and an essential component of the bacterial peptidoglycan. The sequence is that of Diaminopimelate epimerase from Thermobifida fusca (strain YX).